Consider the following 188-residue polypeptide: Putative manganese efflux pump MntP (188 aa).

Transmembrane regions (helical) follow at residues 3–23 (FYAL…VALA), 35–55 (IAAT…AGWV), 63–83 (FISE…GLKM), 107–127 (VLTA…LAFM), 131–151 (IAFA…VGLA), and 167–187 (AGGL…LGLI).

Belongs to the MntP (TC 9.B.29) family.

The protein resides in the cell inner membrane. Its function is as follows. Probably functions as a manganese efflux pump. This is Putative manganese efflux pump MntP from Neisseria meningitidis serogroup A / serotype 4A (strain DSM 15465 / Z2491).